The sequence spans 103 residues: Histone H4 (103 aa).

K6 carries the post-translational modification N6-acetyl-N6-methyllysine; alternate. Residues K6, K9, and K13 each carry the N6-methyllysine; alternate modification. N6-acetyl-N6-methyllysine; alternate is present on K13. A DNA-binding region spans residues 17–21; sequence KRHRK. K92 is modified (N6-glutaryllysine).

Belongs to the histone H4 family. The nucleosome is a histone octamer containing two molecules each of H2A, H2B, H3 and H4 assembled in one H3-H4 heterotetramer and two H2A-H2B heterodimers. The octamer wraps approximately 147 bp of DNA. Post-translationally, glutarylation at Lys-92 (H4K91glu) destabilizes nucleosomes by promoting dissociation of the H2A-H2B dimers from nucleosomes.

Its subcellular location is the nucleus. The protein resides in the chromosome. In terms of biological role, core component of nucleosome. Nucleosomes wrap and compact DNA into chromatin, limiting DNA accessibility to the cellular machineries which require DNA as a template. Histones thereby play a central role in transcription regulation, DNA repair, DNA replication and chromosomal stability. DNA accessibility is regulated via a complex set of post-translational modifications of histones, also called histone code, and nucleosome remodeling. This chain is Histone H4 (ahsb4), found in Blastobotrys adeninivorans (Yeast).